Consider the following 163-residue polypeptide: Neurotrophin-3 (163 aa).

The first 3 residues, 1-3 (IQS), serve as a signal peptide directing secretion. The propeptide occupies 4–119 (TSMDQGILTE…VLNRTSRRKR (116 aa)). An N-linked (GlcNAc...) asparagine glycan is attached at asparagine 112.

This sequence belongs to the NGF-beta family.

It localises to the secreted. Functionally, seems to promote the survival of visceral and proprioceptive sensory neurons. The sequence is that of Neurotrophin-3 (NTF3) from Eryx colubrinus colubrinus.